The sequence spans 131 residues: Protein FON2 SPARE1 (131 aa).

A signal peptide spans 1–22 (MSRRLGAAAAVLLLWLAVLTFA). Positions 67–131 (SPSSLTTTDR…VPTGPNPLHH (65 aa)) are disordered. The span at 76–97 (RHHHHHRHHGHHHHRGHDRWNR) shows a compositional bias: basic residues.

This sequence belongs to the CLV3/ESR signal peptide family. As to expression, expressed in all aerial apical meristems, including the floral and inflorescence meristems in the reproductive phase and the shoot apical meristem in the vegetative phase. Also detected in the primordia of lateral organs such as the leaf and the floral organs.

It localises to the secreted. Functionally, involved in the maintenance of the floral meristem and of the shoot apical meristem in the vegetative phase. Suppresses the fon2 mutation and acts independently of FON1. In Oryza sativa subsp. japonica, the protein has a single amino acid substitution at the putative processing site of the signal peptide and is inactive. This is Protein FON2 SPARE1 (FOS1) from Oryza sativa subsp. indica (Rice).